Reading from the N-terminus, the 110-residue chain is Large ribosomal subunit protein uL22 (110 aa).

The protein belongs to the universal ribosomal protein uL22 family. Part of the 50S ribosomal subunit.

Its function is as follows. This protein binds specifically to 23S rRNA; its binding is stimulated by other ribosomal proteins, e.g. L4, L17, and L20. It is important during the early stages of 50S assembly. It makes multiple contacts with different domains of the 23S rRNA in the assembled 50S subunit and ribosome. The globular domain of the protein is located near the polypeptide exit tunnel on the outside of the subunit, while an extended beta-hairpin is found that lines the wall of the exit tunnel in the center of the 70S ribosome. The protein is Large ribosomal subunit protein uL22 of Alkaliphilus oremlandii (strain OhILAs) (Clostridium oremlandii (strain OhILAs)).